The chain runs to 291 residues: Probable peptide ABC transporter permease protein y4tQ (291 aa).

5 helical membrane-spanning segments follow: residues 28-48, 92-112, 137-157, 213-233, and 249-269; these read LVLL…AAPL, LIVG…IGVI, LLAI…IVAI, ATVC…GVGV, and LFLA…AVTV. One can recognise an ABC transmembrane type-1 domain in the interval 88 to 276; the sequence is ARISLIVGLL…VTVLAVNLLG (189 aa).

It belongs to the binding-protein-dependent transport system permease family. OppBC subfamily.

It is found in the cell inner membrane. In terms of biological role, probably part of the binding-protein-dependent transport system y4tOPQRS for a peptide. Probably responsible for the translocation of the substrate across the membrane. This is Probable peptide ABC transporter permease protein y4tQ from Sinorhizobium fredii (strain NBRC 101917 / NGR234).